The chain runs to 345 residues: Phosphoribosylformylglycinamidine cyclo-ligase (345 aa).

This sequence belongs to the AIR synthase family.

The protein localises to the cytoplasm. The catalysed reaction is 2-formamido-N(1)-(5-O-phospho-beta-D-ribosyl)acetamidine + ATP = 5-amino-1-(5-phospho-beta-D-ribosyl)imidazole + ADP + phosphate + H(+). It participates in purine metabolism; IMP biosynthesis via de novo pathway; 5-amino-1-(5-phospho-D-ribosyl)imidazole from N(2)-formyl-N(1)-(5-phospho-D-ribosyl)glycinamide: step 2/2. The protein is Phosphoribosylformylglycinamidine cyclo-ligase of Shewanella baltica (strain OS185).